The sequence spans 374 residues: Alanine racemase (374 aa).

Lys-35 acts as the Proton acceptor; specific for D-alanine in catalysis. N6-(pyridoxal phosphate)lysine is present on Lys-35. Arg-133 lines the substrate pocket. The active-site Proton acceptor; specific for L-alanine is Tyr-261. Met-315 provides a ligand contact to substrate.

Belongs to the alanine racemase family. Pyridoxal 5'-phosphate is required as a cofactor.

It catalyses the reaction L-alanine = D-alanine. The protein operates within amino-acid biosynthesis; D-alanine biosynthesis; D-alanine from L-alanine: step 1/1. Catalyzes the interconversion of L-alanine and D-alanine. May also act on other amino acids. This is Alanine racemase (alr) from Psychrobacter sp. (strain PRwf-1).